Consider the following 257-residue polypeptide: Imidazole glycerol phosphate synthase subunit HisF (257 aa).

Active-site residues include D11 and D130.

It belongs to the HisA/HisF family. As to quaternary structure, heterodimer of HisH and HisF.

Its subcellular location is the cytoplasm. It catalyses the reaction 5-[(5-phospho-1-deoxy-D-ribulos-1-ylimino)methylamino]-1-(5-phospho-beta-D-ribosyl)imidazole-4-carboxamide + L-glutamine = D-erythro-1-(imidazol-4-yl)glycerol 3-phosphate + 5-amino-1-(5-phospho-beta-D-ribosyl)imidazole-4-carboxamide + L-glutamate + H(+). The protein operates within amino-acid biosynthesis; L-histidine biosynthesis; L-histidine from 5-phospho-alpha-D-ribose 1-diphosphate: step 5/9. Its function is as follows. IGPS catalyzes the conversion of PRFAR and glutamine to IGP, AICAR and glutamate. The HisF subunit catalyzes the cyclization activity that produces IGP and AICAR from PRFAR using the ammonia provided by the HisH subunit. The chain is Imidazole glycerol phosphate synthase subunit HisF from Shewanella sp. (strain W3-18-1).